The chain runs to 1250 residues: Probable autotransporter YfaL (1250 aa).

The first 28 residues, 1–28 (MRIIFLRKEYLSLLPSMIASLFSANGVA), serve as a signal peptide directing secretion. Residues 914–951 (RSQEVTPPSPPDPDPTPDPDPTPDPDPTPDPEPTPAYQ) form a disordered region. Copy 1 of the repeat occupies 919 to 920 (TP). The tract at residues 919–948 (TPPSPPDPDPTPDPDPTPDPDPTPDPEPTP) is 15 X 2 AA approximate tandem repeats of [DTPE]-P. The stretch at 921 to 922 (PS) is one 2; approximate repeat. The stretch at 923-924 (PP) is repeat 3. One copy of the 4; approximate repeat lies at 925-926 (DP). 11 repeat units span residues 927–928 (DP), 929–930 (TP), 931–932 (DP), 933–934 (DP), 935–936 (TP), 937–938 (DP), 939–940 (DP), 941–942 (TP), 943–944 (DP), 945–946 (EP), and 947–948 (TP). The segment covering 928–942 (PTPDPDPTPDPDPTP) has biased composition (acidic residues). In terms of domain architecture, Autotransporter spans 980–1250 (AGGDGQTLNL…AGFLSMTVKW (271 aa)).

An approximately 170 kDa protein is detected in the outer membrane, while a C-terminal 55 kDa fragment is detected in whole cells. The full-length putative autotransporter may be cleaved to release the mature protein from the outer membrane; Pefabloc SC, a Ser-Thr protease inhibitor prevents the appearance of the 55 kDa C--terminal fragment.

Its subcellular location is the periplasm. The protein localises to the secreted. It is found in the cell surface. It localises to the cell outer membrane. In terms of biological role, probably an autotransporter. Upon overexpression shows increased adherence to polyvinyl chloride (PVC) plates, increased mature biofilm formation. This Escherichia coli (strain K12) protein is Probable autotransporter YfaL (yfaL).